We begin with the raw amino-acid sequence, 195 residues long: 3-isopropylmalate dehydratase small subunit (195 aa).

Belongs to the LeuD family. LeuD type 1 subfamily. In terms of assembly, heterodimer of LeuC and LeuD.

The catalysed reaction is (2R,3S)-3-isopropylmalate = (2S)-2-isopropylmalate. Its pathway is amino-acid biosynthesis; L-leucine biosynthesis; L-leucine from 3-methyl-2-oxobutanoate: step 2/4. In terms of biological role, catalyzes the isomerization between 2-isopropylmalate and 3-isopropylmalate, via the formation of 2-isopropylmaleate. The protein is 3-isopropylmalate dehydratase small subunit of Thermobifida fusca (strain YX).